Here is a 574-residue protein sequence, read N- to C-terminus: Septation ring formation regulator EzrA (574 aa).

At 1–7 (MSSGIIL) the chain is on the extracellular side. A helical membrane pass occupies residues 8-26 (LIVAIVLLVIIAYLVGVII). Over 27–574 (RKRNDSLITS…YEKTREHIRF (548 aa)) the chain is Cytoplasmic. Coiled-coil stretches lie at residues 102–141 (NFIR…EEKN), 274–350 (ELVT…ETES), and 459–520 (QLEA…SFEA).

Belongs to the EzrA family.

It is found in the cell membrane. Its function is as follows. Negative regulator of FtsZ ring formation; modulates the frequency and position of FtsZ ring formation. Inhibits FtsZ ring formation at polar sites. Interacts either with FtsZ or with one of its binding partners to promote depolymerization. The polypeptide is Septation ring formation regulator EzrA (Streptococcus pyogenes serotype M6 (strain ATCC BAA-946 / MGAS10394)).